Reading from the N-terminus, the 1038-residue chain is TonB-dependent receptor P39 (1038 aa).

Positions 1 to 39 (MFKQKLKMKPKIKRNCTFSGLAFILMLLFSSFTVNNLNA) are cleaved as a signal peptide. Positions 120–127 (DEVVVIGY) match the TonB box motif. One can recognise a TBDR plug domain in the interval 131–243 (KRADVIGAVG…ANGVVLITTK (113 aa)). Positions 249-1038 (FPKMTVDYIS…EIVIGLNVEF (790 aa)) constitute a TBDR beta-barrel domain. The TonB C-terminal box motif lies at 1021-1038 (SLRYPNQTEIVIGLNVEF).

This sequence belongs to the TonB-dependent receptor family.

It localises to the cell outer membrane. TonB-dependent receptor probably involved in ulvan degradation. Ulvan is the main polysaccharide component of the Ulvales (green seaweed) cell wall. It is composed of disaccharide building blocks comprising 3-sulfated rhamnose (Rha3S) linked to D-glucuronic acid (GlcA), L-iduronic acid (IduA), or D-xylose (Xyl). The TonB-dependent receptor may mediate transport of ulvan oligosaccharides from the surface of the outer membrane to the periplasm for subsequent degradation. This chain is TonB-dependent receptor P39, found in Formosa agariphila (strain DSM 15362 / KCTC 12365 / LMG 23005 / KMM 3901 / M-2Alg 35-1).